Here is a 208-residue protein sequence, read N- to C-terminus: FMN-dependent NADH:quinone oxidoreductase (208 aa).

FMN-binding positions include 17-19 (SNS), 99-102 (MWNL), and 143-146 (SRGG).

Belongs to the azoreductase type 1 family. As to quaternary structure, homodimer. The cofactor is FMN.

The catalysed reaction is 2 a quinone + NADH + H(+) = 2 a 1,4-benzosemiquinone + NAD(+). It catalyses the reaction N,N-dimethyl-1,4-phenylenediamine + anthranilate + 2 NAD(+) = 2-(4-dimethylaminophenyl)diazenylbenzoate + 2 NADH + 2 H(+). Its function is as follows. Quinone reductase that provides resistance to thiol-specific stress caused by electrophilic quinones. Also exhibits azoreductase activity. Catalyzes the reductive cleavage of the azo bond in aromatic azo compounds to the corresponding amines. This Staphylococcus aureus (strain COL) protein is FMN-dependent NADH:quinone oxidoreductase.